A 160-amino-acid chain; its full sequence is Nucleotide-binding protein AHA_1129 (160 aa).

It belongs to the YajQ family.

Nucleotide-binding protein. The protein is Nucleotide-binding protein AHA_1129 of Aeromonas hydrophila subsp. hydrophila (strain ATCC 7966 / DSM 30187 / BCRC 13018 / CCUG 14551 / JCM 1027 / KCTC 2358 / NCIMB 9240 / NCTC 8049).